The following is a 396-amino-acid chain: S-adenosylmethionine synthase 1 (396 aa).

Mg(2+) is bound at residue E12. An ATP-binding site is contributed by H18. E46 provides a ligand contact to K(+). E59 and Q102 together coordinate L-methionine. ATP is bound by residues 170–172 (DGK), 238–241 (SGRF), D249, 255–256 (RK), A272, K276, and K280. D249 is an L-methionine binding site. K280 is a binding site for L-methionine.

The protein belongs to the AdoMet synthase family. Homotetramer. The cofactor is Mn(2+). Mg(2+) serves as cofactor. It depends on Co(2+) as a cofactor. Requires K(+) as cofactor.

The protein localises to the cytoplasm. The enzyme catalyses L-methionine + ATP + H2O = S-adenosyl-L-methionine + phosphate + diphosphate. It participates in amino-acid biosynthesis; S-adenosyl-L-methionine biosynthesis; S-adenosyl-L-methionine from L-methionine: step 1/1. In terms of biological role, catalyzes the formation of S-adenosylmethionine from methionine and ATP. The reaction comprises two steps that are both catalyzed by the same enzyme: formation of S-adenosylmethionine (AdoMet) and triphosphate, and subsequent hydrolysis of the triphosphate. This chain is S-adenosylmethionine synthase 1 (SAM1), found in Oryza sativa subsp. japonica (Rice).